We begin with the raw amino-acid sequence, 163 residues long: Nucleotide-binding protein CJJ81176_0398 (163 aa).

It belongs to the YajQ family.

Its function is as follows. Nucleotide-binding protein. The polypeptide is Nucleotide-binding protein CJJ81176_0398 (Campylobacter jejuni subsp. jejuni serotype O:23/36 (strain 81-176)).